A 126-amino-acid chain; its full sequence is Large ribosomal subunit protein bL12 (126 aa).

The protein belongs to the bacterial ribosomal protein bL12 family. In terms of assembly, homodimer. Part of the ribosomal stalk of the 50S ribosomal subunit. Forms a multimeric L10(L12)X complex, where L10 forms an elongated spine to which 2 to 4 L12 dimers bind in a sequential fashion. Binds GTP-bound translation factors.

Its function is as follows. Forms part of the ribosomal stalk which helps the ribosome interact with GTP-bound translation factors. Is thus essential for accurate translation. In Prosthecochloris aestuarii (strain DSM 271 / SK 413), this protein is Large ribosomal subunit protein bL12.